The chain runs to 63 residues: Alpha-toxin CsE5 (63 aa).

The region spanning 2–61 (KDGYPVDSGNCKYECLKDDYCNDLCLERKADKGYCYWGKVSCYCYGLPDNSPTKTSGKCN) is the LCN-type CS-alpha/beta domain. 4 disulfide bridges follow: Cys-12-Cys-60, Cys-16-Cys-36, Cys-22-Cys-43, and Cys-26-Cys-45.

It belongs to the long (4 C-C) scorpion toxin superfamily. Sodium channel inhibitor family. Alpha subfamily. As to expression, expressed by the venom gland.

Its subcellular location is the secreted. Its function is as follows. Alpha toxins bind voltage-independently at site-3 of sodium channels (Nav) and inhibit the inactivation of the activated channels, thereby blocking neuronal transmission. The chain is Alpha-toxin CsE5 from Centruroides sculpturatus (Arizona bark scorpion).